The sequence spans 224 residues: Synaptogyrin-2 (224 aa).

An N-acetylmethionine modification is found at methionine 1. Phosphoserine is present on serine 3. Positions 20 to 171 (FLSQPQVVTR…LASLAYQRYK (152 aa)) constitute an MARVEL domain. Helical transmembrane passes span 31–51 (VSMV…YTNI), 72–92 (SAIG…DAFF), 105–125 (VIGD…GFCF), and 147–167 (AAIT…SLAY).

It belongs to the synaptogyrin family. In terms of processing, may be tyrosine phosphorylated by Src.

The protein localises to the cytoplasmic vesicle membrane. The protein resides in the cytoplasmic vesicle. It is found in the secretory vesicle. It localises to the synaptic vesicle membrane. Its function is as follows. May play a role in regulated exocytosis. In neuronal cells, modulates the localization of synaptophysin/SYP into synaptic-like microvesicles and may therefore play a role in the formation and/or the maturation of this vesicles. May also play a role in GLUT4 storage and transport to the plasma membrane. This chain is Synaptogyrin-2, found in Mus musculus (Mouse).